The following is a 511-amino-acid chain: Putative CBL-interacting protein kinase 13 (511 aa).

Residues 25–279 form the Protein kinase domain; the sequence is FEVGKLLGQG…AEGIMENEWF (255 aa). ATP is bound by residues 31 to 39 and lysine 54; that span reads LGQGNFAKV. Residue aspartate 147 is the Proton acceptor of the active site. Residues 165 to 194 form an activation loop region; that stretch reads DFGLSAVADGMRRDGLFHTFCGTPAYVAPE. The disordered stretch occupies residues 307 to 340; the sequence is VDAPTSPPDTPRTVDSGDVGAAPTRPRKAGSLTS. The NAF domain maps to 321–383; sequence DSGDVGAAPT…PGFDLSGLFD (63 aa). A PPI region spans residues 400 to 429; that stretch reads KHTARFVSAAPVEVIVATLEAAAAAAGMAV.

This sequence belongs to the protein kinase superfamily. CAMK Ser/Thr protein kinase family. SNF1 subfamily. It depends on Mn(2+) as a cofactor.

The catalysed reaction is L-seryl-[protein] + ATP = O-phospho-L-seryl-[protein] + ADP + H(+). It catalyses the reaction L-threonyl-[protein] + ATP = O-phospho-L-threonyl-[protein] + ADP + H(+). Its function is as follows. CIPK serine-threonine protein kinases interact with CBL proteins. Binding of a CBL protein to the regulatory NAF domain of CIPK protein lead to the activation of the kinase in a calcium-dependent manner. The protein is Putative CBL-interacting protein kinase 13 (CIPK13) of Oryza sativa subsp. japonica (Rice).